Here is a 253-residue protein sequence, read N- to C-terminus: DnaJ homolog subfamily C member 8 (253 aa).

Residue Ala-2 is modified to N-acetylalanine. Ser-35 is subject to Phosphoserine. Residues 57–124 form the J domain; sequence NPFEVLQIDP…QKKRALDVIQ (68 aa). N6-acetyllysine is present on Lys-146. Residues 181–222 are compositionally biased toward basic and acidic residues; the sequence is EAKEMHERKRQREEEIEAQEKAKREREWQKNFEESRDGRVDS. Residues 181–253 are disordered; that stretch reads EAKEMHERKR…PPKVKMEQRE (73 aa). 2 consecutive short sequence motifs (nuclear localization signal) follow at residues 189-192 and 203-206; these read KRQR and KRER. Ser-222 bears the Phosphoserine mark. The segment covering 231 to 240 has biased composition (basic residues); the sequence is KGKKEKKNRT. The interval 232–253 is essential for polyglutamine aggregation suppression; it reads GKKEKKNRTFLRPPKVKMEQRE.

Interacts with SRPK1. Interacts with HSP70 (HSPA1A or HSPA1B).

The protein localises to the nucleus. Suppresses polyglutamine (polyQ) aggregation of ATXN3 in neuronal cells. In Mus musculus (Mouse), this protein is DnaJ homolog subfamily C member 8 (Dnajc8).